Reading from the N-terminus, the 177-residue chain is 3-hydroxydecanoyl-[acyl-carrier-protein] dehydratase (177 aa).

The active site involves His76.

Belongs to the thioester dehydratase family. FabA subfamily. In terms of assembly, homodimer.

Its subcellular location is the cytoplasm. It carries out the reaction a (3R)-hydroxyacyl-[ACP] = a (2E)-enoyl-[ACP] + H2O. It catalyses the reaction (3R)-hydroxydecanoyl-[ACP] = (2E)-decenoyl-[ACP] + H2O. The enzyme catalyses (2E)-decenoyl-[ACP] = (3Z)-decenoyl-[ACP]. Its pathway is lipid metabolism; fatty acid biosynthesis. Functionally, necessary for the introduction of cis unsaturation into fatty acids. Catalyzes the dehydration of (3R)-3-hydroxydecanoyl-ACP to E-(2)-decenoyl-ACP and then its isomerization to Z-(3)-decenoyl-ACP. Can catalyze the dehydratase reaction for beta-hydroxyacyl-ACPs with saturated chain lengths up to 16:0, being most active on intermediate chain length. This is 3-hydroxydecanoyl-[acyl-carrier-protein] dehydratase from Mannheimia succiniciproducens (strain KCTC 0769BP / MBEL55E).